Here is a 155-residue protein sequence, read N- to C-terminus: 6,7-dimethyl-8-ribityllumazine synthase (155 aa).

Residues F24, 58-60, and 82-84 each bind 5-amino-6-(D-ribitylamino)uracil; these read AFE and VII. Position 87-88 (87-88) interacts with (2S)-2-hydroxy-3-oxobutyl phosphate; it reads ST. The active-site Proton donor is H90. F115 is a 5-amino-6-(D-ribitylamino)uracil binding site. Residue R129 participates in (2S)-2-hydroxy-3-oxobutyl phosphate binding.

The protein belongs to the DMRL synthase family.

It carries out the reaction (2S)-2-hydroxy-3-oxobutyl phosphate + 5-amino-6-(D-ribitylamino)uracil = 6,7-dimethyl-8-(1-D-ribityl)lumazine + phosphate + 2 H2O + H(+). It participates in cofactor biosynthesis; riboflavin biosynthesis; riboflavin from 2-hydroxy-3-oxobutyl phosphate and 5-amino-6-(D-ribitylamino)uracil: step 1/2. Functionally, catalyzes the formation of 6,7-dimethyl-8-ribityllumazine by condensation of 5-amino-6-(D-ribitylamino)uracil with 3,4-dihydroxy-2-butanone 4-phosphate. This is the penultimate step in the biosynthesis of riboflavin. The polypeptide is 6,7-dimethyl-8-ribityllumazine synthase (Chlorobaculum tepidum (strain ATCC 49652 / DSM 12025 / NBRC 103806 / TLS) (Chlorobium tepidum)).